We begin with the raw amino-acid sequence, 311 residues long: S-adenosyl-L-methionine-dependent tRNA 4-demethylwyosine synthase (311 aa).

The [4Fe-4S] cluster site is built by cysteine 26, cysteine 39, cysteine 52, cysteine 62, cysteine 66, and cysteine 69. The 239-residue stretch at tyrosine 45–asparagine 283 folds into the Radical SAM core domain.

Belongs to the TYW1 family. Monomer. It depends on [4Fe-4S] cluster as a cofactor.

It localises to the cytoplasm. The catalysed reaction is N(1)-methylguanosine(37) in tRNA(Phe) + pyruvate + S-adenosyl-L-methionine = 4-demethylwyosine(37) in tRNA(Phe) + 5'-deoxyadenosine + L-methionine + CO2 + H2O. Component of the wyosine derivatives biosynthesis pathway that catalyzes the condensation of N-methylguanine with 2 carbon atoms from pyruvate to form the tricyclic 4-demethylwyosine (imG-14) on guanosine-37 of tRNA(Phe). The protein is S-adenosyl-L-methionine-dependent tRNA 4-demethylwyosine synthase of Methanocaldococcus jannaschii (strain ATCC 43067 / DSM 2661 / JAL-1 / JCM 10045 / NBRC 100440) (Methanococcus jannaschii).